Consider the following 250-residue polypeptide: UPF0309 protein BH0227 (250 aa).

In terms of domain architecture, SIS spans 31–214 (VAESIQNGGI…KRMADNGYEP (184 aa)).

It belongs to the UPF0309 family.

This Halalkalibacterium halodurans (strain ATCC BAA-125 / DSM 18197 / FERM 7344 / JCM 9153 / C-125) (Bacillus halodurans) protein is UPF0309 protein BH0227.